A 414-amino-acid chain; its full sequence is Ornithine aminotransferase (414 aa).

A disulfide bridge links cysteine 154 with cysteine 163. The residue at position 262 (lysine 262) is an N6-(pyridoxal phosphate)lysine.

This sequence belongs to the class-III pyridoxal-phosphate-dependent aminotransferase family. As to quaternary structure, homodimer. Requires pyridoxal 5'-phosphate as cofactor. In terms of processing, the disulfide bond between Cys-154 and Cys-163 is reduced by TRX1 which increases OAT catalytic activity.

The protein resides in the cytoplasm. The enzyme catalyses a 2-oxocarboxylate + L-ornithine = L-glutamate 5-semialdehyde + an L-alpha-amino acid. It catalyses the reaction L-ornithine + 2-oxoglutarate = L-glutamate 5-semialdehyde + L-glutamate. Its pathway is amino-acid biosynthesis; L-proline biosynthesis; L-glutamate 5-semialdehyde from L-ornithine: step 1/1. Its activity is regulated as follows. Unlike for mammalian OATs, activity is increased by TRX1-mediated reduction of the disulfide bond between Cys-154 and Cys-163. Binding to TRX1 may also induce conformational changes that facilitate substrate binding. In terms of biological role, catalyzes the transamination of alpha-ketoglutarate with ornithine or N-acetylornithine and of glutamate-5-semialdehyde with glutamate and alanine. The chain is Ornithine aminotransferase from Plasmodium yoelii yoelii.